The sequence spans 319 residues: Replication factor C small subunit 2 (319 aa).

Position 44–51 (44–51) interacts with ATP; the sequence is GPPGTGKT.

This sequence belongs to the activator 1 small subunits family. RfcS subfamily. In terms of assembly, heteromultimer composed of small subunits (RfcS) and large subunits (RfcL).

Part of the RFC clamp loader complex which loads the PCNA sliding clamp onto DNA. In Pyrobaculum aerophilum (strain ATCC 51768 / DSM 7523 / JCM 9630 / CIP 104966 / NBRC 100827 / IM2), this protein is Replication factor C small subunit 2.